Reading from the N-terminus, the 336-residue chain is Fructose-1,6-bisphosphatase class 1 (336 aa).

Mg(2+) is bound by residues Glu92, Asp115, Leu117, and Asp118. Substrate is bound by residues 118 to 121 (DGSS), Asn211, Tyr244, 262 to 264 (YLY), and Lys274. Glu280 lines the Mg(2+) pocket.

This sequence belongs to the FBPase class 1 family. As to quaternary structure, homotetramer. It depends on Mg(2+) as a cofactor.

It localises to the cytoplasm. It catalyses the reaction beta-D-fructose 1,6-bisphosphate + H2O = beta-D-fructose 6-phosphate + phosphate. The protein operates within carbohydrate biosynthesis; gluconeogenesis. This chain is Fructose-1,6-bisphosphatase class 1, found in Vibrio cholerae serotype O1 (strain ATCC 39541 / Classical Ogawa 395 / O395).